The primary structure comprises 161 residues: Phosphopantetheine adenylyltransferase (161 aa).

Thr-9 provides a ligand contact to substrate. ATP is bound by residues 9 to 10 (TF) and His-17. Substrate-binding residues include Lys-41, Leu-73, and Arg-87. Residues 88 to 90 (GLR), Glu-98, and 123 to 129 (YQFISGT) each bind ATP.

The protein belongs to the bacterial CoaD family. As to quaternary structure, homohexamer. Requires Mg(2+) as cofactor.

The protein localises to the cytoplasm. The enzyme catalyses (R)-4'-phosphopantetheine + ATP + H(+) = 3'-dephospho-CoA + diphosphate. The protein operates within cofactor biosynthesis; coenzyme A biosynthesis; CoA from (R)-pantothenate: step 4/5. Reversibly transfers an adenylyl group from ATP to 4'-phosphopantetheine, yielding dephospho-CoA (dPCoA) and pyrophosphate. The sequence is that of Phosphopantetheine adenylyltransferase from Cupriavidus necator (strain ATCC 17699 / DSM 428 / KCTC 22496 / NCIMB 10442 / H16 / Stanier 337) (Ralstonia eutropha).